A 234-amino-acid polypeptide reads, in one-letter code: Large ribosomal subunit protein uL1 (234 aa).

The protein belongs to the universal ribosomal protein uL1 family. Part of the 50S ribosomal subunit.

In terms of biological role, binds directly to 23S rRNA. The L1 stalk is quite mobile in the ribosome, and is involved in E site tRNA release. Its function is as follows. Protein L1 is also a translational repressor protein, it controls the translation of the L11 operon by binding to its mRNA. This is Large ribosomal subunit protein uL1 from Bartonella tribocorum (strain CIP 105476 / IBS 506).